Here is a 486-residue protein sequence, read N- to C-terminus: Ribosomal RNA small subunit methyltransferase F (486 aa).

S-adenosyl-L-methionine-binding positions include 124–130 (ASAPGSK), glutamate 148, aspartate 175, and aspartate 193. Cysteine 246 (nucleophile) is an active-site residue.

The protein belongs to the class I-like SAM-binding methyltransferase superfamily. RsmB/NOP family.

Its subcellular location is the cytoplasm. The enzyme catalyses cytidine(1407) in 16S rRNA + S-adenosyl-L-methionine = 5-methylcytidine(1407) in 16S rRNA + S-adenosyl-L-homocysteine + H(+). Specifically methylates the cytosine at position 1407 (m5C1407) of 16S rRNA. This chain is Ribosomal RNA small subunit methyltransferase F, found in Shewanella baltica (strain OS185).